Reading from the N-terminus, the 443-residue chain is Serine transporter (443 aa).

11 helical membrane passes run 38 to 60 (TGWVIMSIGMAIGAGIVFLPVQV), 65 to 87 (LWVFLLSSVIGYPAMYLFQRLFI), 111 to 131 (WGILLGALYFVMLVIWMFVYS), 150 to 170 (GLLSDSPFYGLVLICILVAIS), 183 to 203 (GMVLTKLLVVAALGVSMVGMW), 215 to 235 (GLLVKNAIITLPFTLTSILFI), 265 to 285 (IAFGILFIIVFFYAVSFTLAM), 319 to 339 (VSVILNIFAVMTAFFGVYLGF), 368 to 388 (GIMIFAILLAWSAIVLNAPVL), 390 to 410 (FTSICSPIFGLVGCLIPAWLV), and 422 to 442 (MSLYLIIVTGLLLCVSPFLAF).

Belongs to the amino acid/polyamine transporter 2 family. SdaC/TdcC subfamily.

The protein localises to the cell inner membrane. In terms of biological role, transports both D- and L-serine; allows growth of strain CFT073 cells normally unable to transport D-serine on that substrate. Transport relies on the H(+) gradient and is not competed by L-threonine. May play a role in L-cysteine detoxification. This Escherichia coli O157:H7 protein is Serine transporter.